A 393-amino-acid polypeptide reads, in one-letter code: Actin-related protein 2 (393 aa).

ATP contacts are provided by residues 158 to 160, 212 to 216, and 303 to 308; these read GDG, RQMKE, and GGTTMY.

It belongs to the actin family. ARP2 subfamily. As to quaternary structure, component of the Arp2/3 complex.

It localises to the cytoplasm. The protein localises to the cytoskeleton. In terms of biological role, functions as ATP-binding component of the Arp2/3 complex which is involved in regulation of actin polymerization and together with an activating nucleation-promoting factor (NPF) mediates the formation of branched actin networks. Seems to contact the pointed end of the daughter actin filament. In Caenorhabditis briggsae, this protein is Actin-related protein 2 (arx-2).